The primary structure comprises 199 residues: Recombination protein RecR (199 aa).

A C4-type zinc finger spans residues 57–72 (CSSCRTFTEESLCPIC). Residues 81–176 (DLICVVETPA…NVSRIAHGVP (96 aa)) form the Toprim domain.

Belongs to the RecR family.

In terms of biological role, may play a role in DNA repair. It seems to be involved in an RecBC-independent recombinational process of DNA repair. It may act with RecF and RecO. This is Recombination protein RecR from Shewanella loihica (strain ATCC BAA-1088 / PV-4).